Reading from the N-terminus, the 512-residue chain is Putative ribose/galactose/methyl galactoside import ATP-binding protein 1 (512 aa).

ABC transporter domains are found at residues 14 to 251 (IALT…VGRQ) and 262 to 507 (TSAN…TQRE). Position 46 to 53 (46 to 53 (GENGAGKS)) interacts with ATP.

It belongs to the ABC transporter superfamily. Carbohydrate importer 2 (CUT2) (TC 3.A.1.2) family.

The protein localises to the cell inner membrane. It catalyses the reaction D-ribose(out) + ATP + H2O = D-ribose(in) + ADP + phosphate + H(+). The enzyme catalyses D-galactose(out) + ATP + H2O = D-galactose(in) + ADP + phosphate + H(+). Its function is as follows. Part of an ABC transporter complex involved in carbohydrate import. Could be involved in ribose, galactose and/or methyl galactoside import. Responsible for energy coupling to the transport system. This is Putative ribose/galactose/methyl galactoside import ATP-binding protein 1 from Burkholderia lata (strain ATCC 17760 / DSM 23089 / LMG 22485 / NCIMB 9086 / R18194 / 383).